Consider the following 437-residue polypeptide: Putative galacturan 1,4-alpha-galacturonidase A (437 aa).

The signal sequence occupies residues 1-20 (MKLSGSSALLLLGFGLLGHA). N-linked (GlcNAc...) asparagine glycosylation is found at N30, N101, N110, N161, N196, and N203. A PbH1 1 repeat occupies 222 to 243 (SDHVTITNWVYEGGDDAVAFKP). D236 functions as the Proton donor in the catalytic mechanism. N-linked (GlcNAc...) asparagine glycosylation is found at N244, N252, N278, N324, N352, N371, N382, and N387. PbH1 repeat units follow at residues 245 to 265 (STNI…AFGS), 276 to 302 (VENI…YFKS), and 322 to 343 (VRNV…YIDT). C396 and C402 are joined by a disulfide.

It belongs to the glycosyl hydrolase 28 family.

Its subcellular location is the secreted. It carries out the reaction [(1-&gt;4)-alpha-D-galacturonosyl](n) + H2O = alpha-D-galacturonate + [(1-&gt;4)-alpha-D-galacturonosyl](n-1). In terms of biological role, specific in hydrolyzing the terminal glycosidic bond of polygalacturonic acid and oligogalacturonates. The chain is Putative galacturan 1,4-alpha-galacturonidase A (rgxA) from Aspergillus flavus (strain ATCC 200026 / FGSC A1120 / IAM 13836 / NRRL 3357 / JCM 12722 / SRRC 167).